The primary structure comprises 442 residues: tRNA(Ile)-lysidine synthase (442 aa).

28-33 lines the ATP pocket; the sequence is SGGLDS.

Belongs to the tRNA(Ile)-lysidine synthase family.

The protein localises to the cytoplasm. The catalysed reaction is cytidine(34) in tRNA(Ile2) + L-lysine + ATP = lysidine(34) in tRNA(Ile2) + AMP + diphosphate + H(+). Functionally, ligates lysine onto the cytidine present at position 34 of the AUA codon-specific tRNA(Ile) that contains the anticodon CAU, in an ATP-dependent manner. Cytidine is converted to lysidine, thus changing the amino acid specificity of the tRNA from methionine to isoleucine. The chain is tRNA(Ile)-lysidine synthase from Pseudomonas aeruginosa (strain ATCC 15692 / DSM 22644 / CIP 104116 / JCM 14847 / LMG 12228 / 1C / PRS 101 / PAO1).